Consider the following 506-residue polypeptide: 2,3-bisphosphoglycerate-independent phosphoglycerate mutase (506 aa).

Mn(2+)-binding residues include D9 and S59. Residue S59 is the Phosphoserine intermediate of the active site. Residues H120, 149-150, R181, R187, 254-257, and K327 contribute to the substrate site; these read RD and RADR. Mn(2+) is bound by residues D394, H398, D435, H436, and H452.

The protein belongs to the BPG-independent phosphoglycerate mutase family. The cofactor is Mn(2+).

It carries out the reaction (2R)-2-phosphoglycerate = (2R)-3-phosphoglycerate. It functions in the pathway carbohydrate degradation; glycolysis; pyruvate from D-glyceraldehyde 3-phosphate: step 3/5. In terms of biological role, catalyzes the interconversion of 2-phosphoglycerate and 3-phosphoglycerate. The protein is 2,3-bisphosphoglycerate-independent phosphoglycerate mutase of Natronomonas pharaonis (strain ATCC 35678 / DSM 2160 / CIP 103997 / JCM 8858 / NBRC 14720 / NCIMB 2260 / Gabara) (Halobacterium pharaonis).